A 319-amino-acid chain; its full sequence is Acetyl-coenzyme A carboxylase carboxyl transferase subunit alpha (319 aa).

The 254-residue stretch at 43-296 (LRDKSIELTR…KKQLLFDLSE (254 aa)) folds into the CoA carboxyltransferase C-terminal domain.

The protein belongs to the AccA family. As to quaternary structure, acetyl-CoA carboxylase is a heterohexamer composed of biotin carboxyl carrier protein (AccB), biotin carboxylase (AccC) and two subunits each of ACCase subunit alpha (AccA) and ACCase subunit beta (AccD).

The protein resides in the cytoplasm. It carries out the reaction N(6)-carboxybiotinyl-L-lysyl-[protein] + acetyl-CoA = N(6)-biotinyl-L-lysyl-[protein] + malonyl-CoA. The protein operates within lipid metabolism; malonyl-CoA biosynthesis; malonyl-CoA from acetyl-CoA: step 1/1. Component of the acetyl coenzyme A carboxylase (ACC) complex. First, biotin carboxylase catalyzes the carboxylation of biotin on its carrier protein (BCCP) and then the CO(2) group is transferred by the carboxyltransferase to acetyl-CoA to form malonyl-CoA. The chain is Acetyl-coenzyme A carboxylase carboxyl transferase subunit alpha from Baumannia cicadellinicola subsp. Homalodisca coagulata.